Reading from the N-terminus, the 305-residue chain is Mat- sexual cell fertilization-promoting factor (305 aa).

Positions 38–93 (PAKKKVNGFMGYRSYYSSMFSQLPQKERSPILTTLWQQDPFHKEWDFMCAVYSAIR) form a DNA-binding region, alpha box.

This sequence belongs to the MATALPHA1 family.

Its subcellular location is the nucleus. Functionally, controls fertilization, probably by determining the mating type. May be involved in the post-fertilization steps of the sexual cycle besides mat+. It is required for the developmental events that occur in the female organ after fertilization. The protein is Mat- sexual cell fertilization-promoting factor (FMR1) of Podospora anserina (Pleurage anserina).